A 419-amino-acid polypeptide reads, in one-letter code: Menaquinone reductase, integral membrane subunit (419 aa).

Helical transmembrane passes span 23 to 43 (LSKFMMWMAFVFVFFGWGLYA), 61 to 81 (FGFGLWITFDLAVIALGAGAF), 98 to 118 (IINLAVIIGFLCYSGAMLVLV), 143 to 163 (VIFCITCYCLVLIIEYVPLIL), 176 to 196 (AVAHNFHVMMPLFAGIGAFLS), 221 to 241 (FFIWPWTFFLYVLSAVGSGPV), 270 to 290 (IAGTMLMVYLIFKFADTYAWA), 316 to 336 (LWAELFYCGLVPAIILIVPAL), 341 to 361 (VLFYSAAILDCIGITINRYVM), and 383 to 403 (WAEWGASVMIVAYAALVLSLS).

Belongs to the NrfD family. As to quaternary structure, the Qrc complex is composed of four subunits: QrcA, QrcB, QrcC and QrcD. Can form a supercomplex with the [NiFe] hydrogenase HynA1 and the tetraheme Type I cytochrome c3 TpIc(3), its physiological electron donors.

It is found in the cell inner membrane. Component of the respiratory Qrc complex, that catalyzes the reduction of the menaquinone pool using electrons transferred from the reduced periplasmic cytochrome c3, and which is probably involved in sulfate respiration. Is likely essential for growth on H(2) or formate since the periplasmic hydrogenases and/or formate dehydrogenases act as primary electron donors for the Qrc complex. The QrcD subunit anchors the protein complex to the membrane and likely interacts with the quinone pool. The chain is Menaquinone reductase, integral membrane subunit from Nitratidesulfovibrio vulgaris (strain ATCC 29579 / DSM 644 / CCUG 34227 / NCIMB 8303 / VKM B-1760 / Hildenborough) (Desulfovibrio vulgaris).